The chain runs to 271 residues: 4-hydroxy-tetrahydrodipicolinate reductase (271 aa).

NAD(+) contacts are provided by residues 12–17 and Glu38; that span reads GGSGRM. Residue Arg39 participates in NADP(+) binding. NAD(+) contacts are provided by residues 102-104 and 126-129; these read GTT and APNM. His159 acts as the Proton donor/acceptor in catalysis. Residue His160 coordinates (S)-2,3,4,5-tetrahydrodipicolinate. The active-site Proton donor is the Lys163. Position 169–170 (169–170) interacts with (S)-2,3,4,5-tetrahydrodipicolinate; it reads GT.

The protein belongs to the DapB family.

It is found in the cytoplasm. It catalyses the reaction (S)-2,3,4,5-tetrahydrodipicolinate + NAD(+) + H2O = (2S,4S)-4-hydroxy-2,3,4,5-tetrahydrodipicolinate + NADH + H(+). It carries out the reaction (S)-2,3,4,5-tetrahydrodipicolinate + NADP(+) + H2O = (2S,4S)-4-hydroxy-2,3,4,5-tetrahydrodipicolinate + NADPH + H(+). The protein operates within amino-acid biosynthesis; L-lysine biosynthesis via DAP pathway; (S)-tetrahydrodipicolinate from L-aspartate: step 4/4. Catalyzes the conversion of 4-hydroxy-tetrahydrodipicolinate (HTPA) to tetrahydrodipicolinate. This Shewanella sediminis (strain HAW-EB3) protein is 4-hydroxy-tetrahydrodipicolinate reductase.